A 328-amino-acid polypeptide reads, in one-letter code: Probable tRNA pseudouridine synthase B (328 aa).

The Nucleophile role is filled by Asp71. The 76-residue stretch at 238 to 313 folds into the PUA domain; it reads LPKIWVRDSA…LVARVDRVIM (76 aa).

Belongs to the pseudouridine synthase TruB family. Type 2 subfamily.

The catalysed reaction is uridine(55) in tRNA = pseudouridine(55) in tRNA. Its function is as follows. Could be responsible for synthesis of pseudouridine from uracil-55 in the psi GC loop of transfer RNAs. This Pyrobaculum islandicum (strain DSM 4184 / JCM 9189 / GEO3) protein is Probable tRNA pseudouridine synthase B.